A 435-amino-acid chain; its full sequence is Tol-Pal system protein TolB (435 aa).

The first 24 residues, 1-24 (MIPMPKMIRSLLLLFCLLPLGAQA), serve as a signal peptide directing secretion.

It belongs to the TolB family. In terms of assembly, the Tol-Pal system is composed of five core proteins: the inner membrane proteins TolA, TolQ and TolR, the periplasmic protein TolB and the outer membrane protein Pal. They form a network linking the inner and outer membranes and the peptidoglycan layer.

The protein localises to the periplasm. In terms of biological role, part of the Tol-Pal system, which plays a role in outer membrane invagination during cell division and is important for maintaining outer membrane integrity. The protein is Tol-Pal system protein TolB of Thioalkalivibrio sulfidiphilus (strain HL-EbGR7).